Reading from the N-terminus, the 927-residue chain is Protein LONGIFOLIA 1 (927 aa).

Disordered stretches follow at residues 41–198, 210–257, 460–588, and 605–626; these read TGDE…EGRR, YDER…GHRR, AQKV…SDSN, and YERN…DLGM. Residues 86–114 show a composition bias toward low complexity; it reads SSESSSRLSFSSSPCSSSFSSADISTTAS. Residues 115 to 125 show a composition bias toward polar residues; that stretch reads QFEQPGLSNGE. The span at 146–165 shows a compositional bias: basic and acidic residues; that stretch reads DIRELVRSSIHKETRTRDEE. Over residues 182-193 the composition is skewed to polar residues; sequence KESSPSRNSNEW. A compositionally biased stretch (basic and acidic residues) spans 210 to 226; that stretch reads YDERETRKTGAKLKETP. The span at 232–245 shows a compositional bias: low complexity; sequence SRSNSFRSARSSCS. Composition is skewed to polar residues over residues 483-500 and 538-553; these read QTES…QSKS and NKNQ…TESA. Basic and acidic residues-rich tracts occupy residues 569–584 and 605–616; these read SEDR…RSLR and YERNSDITEQHT.

In terms of assembly, interacts (via C-terminus) with TON1A and TON1B. Expressed in roots, petioles, leaf blades and floral organs.

The protein resides in the nucleus. Functionally, in association with LNG2, regulates leaf morphology by promoting longitudinal polar cell elongation independently of ROT3. In Arabidopsis thaliana (Mouse-ear cress), this protein is Protein LONGIFOLIA 1 (LNG1).